Consider the following 227-residue polypeptide: Cytochrome c oxidase subunit 2 (227 aa).

Over 1–14 the chain is Mitochondrial intermembrane; sequence MAYPFELGFQDATS. A helical transmembrane segment spans residues 15 to 45; it reads PIMEELLHFHDHTLMIVFLISSLVLYIISLM. Residues 46-59 lie on the Mitochondrial matrix side of the membrane; that stretch reads LTTKLTHTSTMDAQ. The chain crosses the membrane as a helical span at residues 60–87; it reads EVETIWTILPAIILILIALPSLRILYMM. Over 88 to 227 the chain is Mitochondrial intermembrane; sequence DEINDPSLTV…HFENWSSSML (140 aa). 6 residues coordinate Cu cation: histidine 161, cysteine 196, glutamate 198, cysteine 200, histidine 204, and methionine 207. Glutamate 198 provides a ligand contact to Mg(2+).

The protein belongs to the cytochrome c oxidase subunit 2 family. Component of the cytochrome c oxidase (complex IV, CIV), a multisubunit enzyme composed of 14 subunits. The complex is composed of a catalytic core of 3 subunits MT-CO1, MT-CO2 and MT-CO3, encoded in the mitochondrial DNA, and 11 supernumerary subunits COX4I, COX5A, COX5B, COX6A, COX6B, COX6C, COX7A, COX7B, COX7C, COX8 and NDUFA4, which are encoded in the nuclear genome. The complex exists as a monomer or a dimer and forms supercomplexes (SCs) in the inner mitochondrial membrane with NADH-ubiquinone oxidoreductase (complex I, CI) and ubiquinol-cytochrome c oxidoreductase (cytochrome b-c1 complex, complex III, CIII), resulting in different assemblies (supercomplex SCI(1)III(2)IV(1) and megacomplex MCI(2)III(2)IV(2)). Found in a complex with TMEM177, COA6, COX18, COX20, SCO1 and SCO2. Interacts with TMEM177 in a COX20-dependent manner. Interacts with COX20. Interacts with COX16. The cofactor is Cu cation.

Its subcellular location is the mitochondrion inner membrane. It carries out the reaction 4 Fe(II)-[cytochrome c] + O2 + 8 H(+)(in) = 4 Fe(III)-[cytochrome c] + 2 H2O + 4 H(+)(out). In terms of biological role, component of the cytochrome c oxidase, the last enzyme in the mitochondrial electron transport chain which drives oxidative phosphorylation. The respiratory chain contains 3 multisubunit complexes succinate dehydrogenase (complex II, CII), ubiquinol-cytochrome c oxidoreductase (cytochrome b-c1 complex, complex III, CIII) and cytochrome c oxidase (complex IV, CIV), that cooperate to transfer electrons derived from NADH and succinate to molecular oxygen, creating an electrochemical gradient over the inner membrane that drives transmembrane transport and the ATP synthase. Cytochrome c oxidase is the component of the respiratory chain that catalyzes the reduction of oxygen to water. Electrons originating from reduced cytochrome c in the intermembrane space (IMS) are transferred via the dinuclear copper A center (CU(A)) of subunit 2 and heme A of subunit 1 to the active site in subunit 1, a binuclear center (BNC) formed by heme A3 and copper B (CU(B)). The BNC reduces molecular oxygen to 2 water molecules using 4 electrons from cytochrome c in the IMS and 4 protons from the mitochondrial matrix. In Tamias amoenus (Yellow-pine chipmunk), this protein is Cytochrome c oxidase subunit 2 (MT-CO2).